The chain runs to 381 residues: Queuine tRNA-ribosyltransferase (381 aa).

The active-site Proton acceptor is the aspartate 92. Residues 92–96, aspartate 146, glutamine 190, and glycine 217 each bind substrate; that span reads DSGGF. Positions 248 to 254 are RNA binding; sequence GVGRPED. Catalysis depends on aspartate 267, which acts as the Nucleophile. The interval 272–276 is RNA binding; important for wobble base 34 recognition; sequence TRNAR. Positions 305, 307, 310, and 337 each coordinate Zn(2+).

Belongs to the queuine tRNA-ribosyltransferase family. Homodimer. Within each dimer, one monomer is responsible for RNA recognition and catalysis, while the other monomer binds to the replacement base PreQ1. Zn(2+) serves as cofactor.

It catalyses the reaction 7-aminomethyl-7-carbaguanine + guanosine(34) in tRNA = 7-aminomethyl-7-carbaguanosine(34) in tRNA + guanine. It functions in the pathway tRNA modification; tRNA-queuosine biosynthesis. Functionally, catalyzes the base-exchange of a guanine (G) residue with the queuine precursor 7-aminomethyl-7-deazaguanine (PreQ1) at position 34 (anticodon wobble position) in tRNAs with GU(N) anticodons (tRNA-Asp, -Asn, -His and -Tyr). Catalysis occurs through a double-displacement mechanism. The nucleophile active site attacks the C1' of nucleotide 34 to detach the guanine base from the RNA, forming a covalent enzyme-RNA intermediate. The proton acceptor active site deprotonates the incoming PreQ1, allowing a nucleophilic attack on the C1' of the ribose to form the product. After dissociation, two additional enzymatic reactions on the tRNA convert PreQ1 to queuine (Q), resulting in the hypermodified nucleoside queuosine (7-(((4,5-cis-dihydroxy-2-cyclopenten-1-yl)amino)methyl)-7-deazaguanosine). In Xanthomonas axonopodis pv. citri (strain 306), this protein is Queuine tRNA-ribosyltransferase.